Here is a 713-residue protein sequence, read N- to C-terminus: Serine/threonine-protein kinase SSN3 (713 aa).

In terms of domain architecture, Protein kinase spans Tyr-66 to Phe-484. Residue Leu-72–Val-80 participates in ATP binding. Low complexity predominate over residues Asn-104 to Thr-120. The interval Asn-104–Ser-188 is disordered. Polar residues predominate over residues Gln-129–His-142. Residues Gly-158–Ala-175 show a composition bias toward low complexity. Lys-201 is an ATP binding site. Asp-304 acts as the Proton acceptor in catalysis. Residues Ser-657–Glu-672 show a composition bias toward polar residues. The tract at residues Ser-657–Asn-713 is disordered. Low complexity predominate over residues Ser-673–Pro-691. Residues Arg-694 to Asn-705 show a composition bias toward polar residues.

Belongs to the protein kinase superfamily. CMGC Ser/Thr protein kinase family. CDC2/CDKX subfamily. In terms of assembly, component of the srb8-11 complex, a regulatory module of the Mediator complex. Mg(2+) serves as cofactor.

The protein resides in the nucleus. The enzyme catalyses L-seryl-[protein] + ATP = O-phospho-L-seryl-[protein] + ADP + H(+). It catalyses the reaction L-threonyl-[protein] + ATP = O-phospho-L-threonyl-[protein] + ADP + H(+). The catalysed reaction is [DNA-directed RNA polymerase] + ATP = phospho-[DNA-directed RNA polymerase] + ADP + H(+). Functionally, component of the srb8-11 complex. The srb8-11 complex is a regulatory module of the Mediator complex which is itself dependent transcription. The srb8-11 complex may be involved in the transcriptional repression of a subset of genes regulated by Mediator. It may inhibit the association of the Mediator complex with RNA polymerase II to form the holoenzyme complex. The srb8-11 complex phosphorylates the C-terminal domain (CTD) of the largest subunit of RNA polymerase II. The protein is Serine/threonine-protein kinase SSN3 (SSN3) of Mycosarcoma maydis (Corn smut fungus).